A 503-amino-acid chain; its full sequence is TGF-beta receptor type-1 (503 aa).

A signal peptide spans 1–33; sequence MEAAVAAPRPRLLLLVLAAAAAAAAALLPGATA. Topologically, residues 34–126 are extracellular; sequence LQCFCHLCTK…SSPGLGPVEL (93 aa). 5 cysteine pairs are disulfide-bonded: Cys-36-Cys-54, Cys-38-Cys-41, Cys-48-Cys-71, Cys-86-Cys-100, and Cys-101-Cys-106. Asn-45 is a glycosylation site (N-linked (GlcNAc...) asparagine). Residues 127–147 traverse the membrane as a helical segment; it reads AAVIAGPVCFVCISLMLMVYI. The Cytoplasmic segment spans residues 148–503; the sequence is CHNRTVIHHR…QLSQQEGIKM (356 aa). Ser-165 carries the phosphoserine modification. Residues 175-204 form the GS domain; sequence TTLKDLIYDMTTSGSGSGLPLLVQRTIART. Thr-185 and Thr-186 each carry phosphothreonine; by TGFBR2. Residues Ser-187, Ser-189, and Ser-191 each carry the phosphoserine; by TGFBR2 modification. The FKBP1A-binding signature appears at 193 to 194; sequence LP. The Protein kinase domain occupies 205–495; the sequence is IVLQESIGKG…LRIKKTLSQL (291 aa). Residues 211-219 and Lys-232 contribute to the ATP site; that span reads IGKGRFGEV. Lys-268 participates in a covalent cross-link: Glycyl lysine isopeptide (Lys-Gly) (interchain with G-Cter in ubiquitin). The active-site Proton acceptor is the Asp-333. A Glycyl lysine isopeptide (Lys-Gly) (interchain with G-Cter in SUMO) cross-link involves residue Lys-391.

It belongs to the protein kinase superfamily. TKL Ser/Thr protein kinase family. TGFB receptor subfamily. Homodimer; in the endoplasmic reticulum but also at the cell membrane. Heterohexamer; TGFB1, TGFB2 and TGFB3 homodimeric ligands assemble a functional receptor composed of two TGFBR1 and TGFBR2 heterodimers to form a ligand-receptor heterohexamer. The respective affinity of TGBRB1 and TGFBR2 for the ligands may modulate the kinetics of assembly of the receptor and may explain the different biological activities of TGFB1, TGFB2 and TGFB3. Component of a complex composed of TSC22D1 (via N-terminus), TGFBR1 and TGFBR2; the interaction between TSC22D1 and TGFBR1 is inhibited by SMAD7 and promoted by TGFB1. Interacts with CD109; inhibits TGF-beta receptor activation in keratinocytes. Interacts with RBPMS. Interacts (unphosphorylated) with FKBP1A; prevents TGFBR1 phosphorylation by TGFBR2 and stabilizes it in the inactive conformation. Interacts with SMAD2, SMAD3 and ZFYVE9; ZFYVE9 recruits SMAD2 and SMAD3 to the TGF-beta receptor. Interacts with TRAF6 and MAP3K7; induces MAP3K7 activation by TRAF6. Interacts with PARD6A; involved in TGF-beta induced epithelial to mesenchymal transition. Interacts with NEDD4L. Interacts with SMAD7, SMURF1 and SMURF2; SMAD7 recruits NEDD4L, SMURF1 and SMURF2 to the TGF-beta receptor. Interacts with USP15 and VPS39. Interacts with SDCBP (via C-terminus). Interacts with CAV1 and this interaction is impaired in the presence of SDCBP. Interacts with APPL1; interaction is TGF beta dependent; mediates trafficking of the TGFBR1 from the endosomes to the nucleus via microtubules in a TRAF6-dependent manner. Interacts with GPR50; this interaction promotes the constitutive activation of SMAD signaling pathway. Requires Mg(2+) as cofactor. Mn(2+) serves as cofactor. Post-translationally, phosphorylated at basal levels in the absence of ligand. Activated upon phosphorylation by TGFBR2, mainly in the GS domain. Phosphorylation in the GS domain abrogates FKBP1A-binding. In terms of processing, N-Glycosylated. Ubiquitinated; undergoes ubiquitination catalyzed by several E3 ubiquitin ligases including SMURF1, SMURF2 and NEDD4L2. Results in the proteasomal and/or lysosomal degradation of the receptor thereby negatively regulating its activity. Deubiquitinated by USP15, leading to stabilization of the protein and enhanced TGF-beta signal. Its ubiquitination and proteasome-mediated degradation is negatively regulated by SDCBP. Ubiquitinated by BFAR via'Lys-63'-linked ubiquitination at Lys-268, leading to TGF-beta signaling activation. As to expression, found in all tissues examined, most abundant in placenta and least abundant in brain and heart. Expressed in a variety of cancer cell lines.

It localises to the cell membrane. The protein resides in the cell junction. Its subcellular location is the tight junction. The protein localises to the cell surface. It is found in the membrane raft. It carries out the reaction L-threonyl-[receptor-protein] + ATP = O-phospho-L-threonyl-[receptor-protein] + ADP + H(+). It catalyses the reaction L-seryl-[receptor-protein] + ATP = O-phospho-L-seryl-[receptor-protein] + ADP + H(+). With respect to regulation, kept in an inactive conformation by FKBP1A preventing receptor activation in absence of ligand. CD109 is another inhibitor of the receptor. Functionally, transmembrane serine/threonine kinase forming with the TGF-beta type II serine/threonine kinase receptor, TGFBR2, the non-promiscuous receptor for the TGF-beta cytokines TGFB1, TGFB2 and TGFB3. Transduces the TGFB1, TGFB2 and TGFB3 signal from the cell surface to the cytoplasm and is thus regulating a plethora of physiological and pathological processes including cell cycle arrest in epithelial and hematopoietic cells, control of mesenchymal cell proliferation and differentiation, wound healing, extracellular matrix production, immunosuppression and carcinogenesis. The formation of the receptor complex composed of 2 TGFBR1 and 2 TGFBR2 molecules symmetrically bound to the cytokine dimer results in the phosphorylation and the activation of TGFBR1 by the constitutively active TGFBR2. Activated TGFBR1 phosphorylates SMAD2 which dissociates from the receptor and interacts with SMAD4. The SMAD2-SMAD4 complex is subsequently translocated to the nucleus where it modulates the transcription of the TGF-beta-regulated genes. This constitutes the canonical SMAD-dependent TGF-beta signaling cascade. Also involved in non-canonical, SMAD-independent TGF-beta signaling pathways. For instance, TGFBR1 induces TRAF6 autoubiquitination which in turn results in MAP3K7 ubiquitination and activation to trigger apoptosis. Also regulates epithelial to mesenchymal transition through a SMAD-independent signaling pathway through PARD6A phosphorylation and activation. This is TGF-beta receptor type-1 (TGFBR1) from Homo sapiens (Human).